Reading from the N-terminus, the 503-residue chain is L-amino-acid oxidase (503 aa).

Residues 1–18 (MNVFFMFSLLFLAALGSC) form the signal peptide. Cysteines 28 and 191 form a disulfide. FAD is bound by residues 61-62 (MS), 81-82 (EA), Arg89, and 105-108 (GPMR). Arg108 provides a ligand contact to substrate. Residue Asn190 is glycosylated (N-linked (GlcNAc...) asparagine). Residue His241 coordinates substrate. Val279 contacts FAD. Cys349 and Cys430 are joined by a disulfide. Substrate is bound at residue Tyr390. FAD-binding positions include Glu475 and 482-487 (GWIDST). 482–483 (GW) is a substrate binding site.

This sequence belongs to the flavin monoamine oxidase family. FIG1 subfamily. As to quaternary structure, homodimer; non-covalently linked. FAD serves as cofactor. Post-translationally, N-glycosylated. The enzymatic activity is not affected by deglycosylation. Expressed by the venom gland.

The protein localises to the secreted. It carries out the reaction an L-alpha-amino acid + O2 + H2O = a 2-oxocarboxylate + H2O2 + NH4(+). It catalyses the reaction L-leucine + O2 + H2O = 4-methyl-2-oxopentanoate + H2O2 + NH4(+). The catalysed reaction is L-phenylalanine + O2 + H2O = 3-phenylpyruvate + H2O2 + NH4(+). The enzyme catalyses L-methionine + O2 + H2O = 4-methylsulfanyl-2-oxobutanoate + H2O2 + NH4(+). It carries out the reaction L-isoleucine + O2 + H2O = (S)-3-methyl-2-oxopentanoate + H2O2 + NH4(+). In terms of biological role, catalyzes an oxidative deamination of predominantly hydrophobic and aromatic L-amino acids, thus producing hydrogen peroxide that may contribute to the diverse toxic effects of this enzyme. Is highly active on L-Met, L-Leu, L-Phe and L-Ile. Exhibits diverse biological activities, such as antibacterial on both Gram-positive and Gram-negative bacteria and antiparasitic activities, as well as induction of platelet aggregation. Effects of snake L-amino oxidases on platelets are controversial, since they either induce aggregation or inhibit agonist-induced aggregation. These different effects are probably due to different experimental conditions. This protein may also have activities in hemorrhage, hemolysis, edema, and apoptosis. The protein is L-amino-acid oxidase of Bothrops pauloensis (Neuwied's lancehead).